The chain runs to 161 residues: Small ribosomal subunit protein uS19 (161 aa).

Residues 1–19 (MARQKKYSGKGGARKKNKQ) are compositionally biased toward basic residues. The interval 1 to 26 (MARQKKYSGKGGARKKNKQKQSVAPR) is disordered.

The protein belongs to the universal ribosomal protein uS19 family.

Its function is as follows. Protein S19 forms a complex with S13 that binds strongly to the 16S ribosomal RNA. This chain is Small ribosomal subunit protein uS19, found in Methanococcus maripaludis (strain C6 / ATCC BAA-1332).